The following is a 182-amino-acid chain: Dynactin subunit 5 (182 aa).

Met-1 carries the post-translational modification N-acetylmethionine.

This sequence belongs to the dynactin subunits 5/6 family. Dynactin subunit 5 subfamily. As to quaternary structure, subunit of dynactin, a multiprotein complex part of a tripartite complex with dynein and a adapter, such as BICDL1, BICD2 or HOOK3. The dynactin complex is built around ACTR1A/ACTB filament and consists of an actin-related filament composed of a shoulder domain, a pointed end and a barbed end. Its length is defined by its flexible shoulder domain. The soulder is composed of 2 DCTN1 subunits, 4 DCTN2 and 2 DCTN3. The 4 DCNT2 (via N-terminus) bind the ACTR1A filament and act as molecular rulers to determine the length. The pointed end is important for binding dynein-dynactin cargo adapters. Consists of 4 subunits: ACTR10, DCNT4, DCTN5 and DCTN6. Within the complex DCTN6 forms a heterodimer with DCTN5. The barbed end is composed of a CAPZA1:CAPZB heterodimers, which binds ACTR1A/ACTB filament and dynactin and stabilizes dynactin. Interacts with N4BP2L1.

The protein resides in the cytoplasm. The protein localises to the cytoskeleton. Its subcellular location is the chromosome. It is found in the centromere. It localises to the kinetochore. Functionally, part of the dynactin complex that activates the molecular motor dynein for ultra-processive transport along microtubules. The sequence is that of Dynactin subunit 5 (DCTN5) from Pongo abelii (Sumatran orangutan).